Consider the following 367-residue polypeptide: Mating-type protein ALPHA2 (367 aa).

Residues Gly-273–Arg-338 constitute a DNA-binding region (homeobox; TALE-type).

Belongs to the TALE/M-ATYP homeobox family. Forms a heterodimer with A1.

The protein resides in the nucleus. Functionally, mating type proteins are sequence specific DNA-binding proteins that act as master switches in yeast differentiation by controlling gene expression in a cell type-specific fashion. Transcriptional corepressor that acts in conjunction with A1 to repress transcription of haploid-specific genes. In Yarrowia lipolytica (strain CLIB 122 / E 150) (Yeast), this protein is Mating-type protein ALPHA2 (MATB2).